The primary structure comprises 219 residues: uncharacterized protein (219 aa).

The protein belongs to the CIA30 family.

It is found in the cytoplasm. It localises to the nucleus. This is an uncharacterized protein from Schizosaccharomyces pombe (strain 972 / ATCC 24843) (Fission yeast).